Consider the following 364-residue polypeptide: Anionic peroxidase (364 aa).

Positions methionine 1–alanine 20 are cleaved as a signal peptide. A propeptide spanning residues glycine 21 to glycine 66 is cleaved from the precursor. The active-site Proton acceptor is the histidine 99. Residues aspartate 100, valine 103, glycine 105, and aspartate 107 each contribute to the Ca(2+) site. Cysteines 101 and 106 form a disulfide. 4 N-linked (GlcNAc...) asparagine glycosylation sites follow: asparagine 113, asparagine 188, asparagine 202, and asparagine 216. Intrachain disulfides connect cysteine 155–cysteine 343 and cysteine 234–cysteine 255. Histidine 227 serves as a coordination point for heme b. Position 228 (threonine 228) interacts with Ca(2+). N-linked (GlcNAc...) asparagine glycosylation is found at asparagine 254 and asparagine 260. Residues aspartate 268, threonine 270, and aspartate 275 each coordinate Ca(2+). N-linked (GlcNAc...) asparagine glycosylation is present at asparagine 299.

This sequence belongs to the peroxidase family. Classical plant (class III) peroxidase subfamily. Requires Ca(2+) as cofactor. Heme b is required as a cofactor. As to expression, highly expressed in suspension cultured cells and calli. Weak expression also found in the stems of intact plants. No expression in leaf, tuberous root and non-tuberous root.

Its subcellular location is the secreted. The enzyme catalyses 2 a phenolic donor + H2O2 = 2 a phenolic radical donor + 2 H2O. Its function is as follows. Removal of H(2)O(2), oxidation of toxic reductants, biosynthesis and degradation of lignin, suberization, auxin catabolism, response to environmental stresses such as wounding, pathogen attack and oxidative stress. These functions might be dependent on each isozyme/isoform in each plant tissue. In terms of biological role, may contribute to protection against cold-induced oxidative stress. The polypeptide is Anionic peroxidase (Ipomoea batatas (Sweet potato)).